A 907-amino-acid polypeptide reads, in one-letter code: Dual serine/threonine and tyrosine protein kinase (907 aa).

Residues 373-409 (RKKENELYESLMNIANRKQEEMKDMIVETLNTMKEEL) are a coiled coil. The region spanning 630–884 (PKLGQELGRG…PLLGIVQPML (255 aa)) is the Protein kinase domain. ATP contacts are provided by residues 636 to 644 (LGRGQYGVV) and K659. Residue D755 is the Proton acceptor of the active site.

The protein belongs to the protein kinase superfamily. Ser/Thr protein kinase family.

Its subcellular location is the cytoplasm. It localises to the cell membrane. It is found in the apical cell membrane. The protein localises to the basolateral cell membrane. The protein resides in the cell junction. The enzyme catalyses L-seryl-[protein] + ATP = O-phospho-L-seryl-[protein] + ADP + H(+). The catalysed reaction is L-threonyl-[protein] + ATP = O-phospho-L-threonyl-[protein] + ADP + H(+). It catalyses the reaction L-tyrosyl-[protein] + ATP = O-phospho-L-tyrosyl-[protein] + ADP + H(+). Acts as a positive regulator of ERK phosphorylation downstream of fibroblast growth factor-receptor activation. Involved in the regulation of both caspase-dependent apoptosis and caspase-independent cell death. In the skin, it plays a predominant role in suppressing caspase-dependent apoptosis in response to UV stress in a range of dermal cell types. The protein is Dual serine/threonine and tyrosine protein kinase of Macaca mulatta (Rhesus macaque).